A 127-amino-acid polypeptide reads, in one-letter code: UPF0212 protein VNG_1264C (127 aa).

The protein belongs to the UPF0212 family.

In Halobacterium salinarum (strain ATCC 700922 / JCM 11081 / NRC-1) (Halobacterium halobium), this protein is UPF0212 protein VNG_1264C.